A 74-amino-acid polypeptide reads, in one-letter code: uncharacterized protein (74 aa).

Positions 1–19 are cleaved as a signal peptide; the sequence is MNPGFDAVDQETAAAQAVA.

This is an uncharacterized protein from Mycobacterium tuberculosis (strain ATCC 25618 / H37Rv).